We begin with the raw amino-acid sequence, 969 residues long: Manganese resistance protein MNR2 (969 aa).

Residues 1–11 show a composition bias toward basic and acidic residues; the sequence is MSTDNSQKDEG. 4 disordered regions span residues 1–49, 96–153, 167–186, and 199–256; these read MSTD…SRRP, GAFI…DLSP, HKSF…NANN, and VNNN…NNSS. Topologically, residues 1–912 are cytoplasmic; sequence MSTDNSQKDE…DMNDVLGKIT (912 aa). Low complexity predominate over residues 13 to 23; that stretch reads PLLSPYSSSPQ. Over residues 24 to 36 the composition is skewed to basic residues; it reads LRKKKRNQKRRKD. The segment covering 37–48 has biased composition (basic and acidic residues); sequence KFVGHLKSDSRR. A Phosphoserine modification is found at S114. The segment covering 141–152 has biased composition (polar residues); the sequence is SDQNRSLVSDLS. The residue at position 175 (S175) is a Phosphoserine. A Phosphothreonine modification is found at T177. The residue at position 182 (S182) is a Phosphoserine. Low complexity-rich tracts occupy residues 225–234 and 244–256; these read NKNSKSTSSD and SRPS…NNSS. S383 carries the phosphoserine modification. Disordered stretches follow at residues 559–662 and 746–769; these read VRRR…KPRE and QSDD…DEDA. Basic and acidic residues predominate over residues 565 to 578; sequence EKQESATLDHESIS. Phosphothreonine is present on T571. A phosphoserine mark is found at S576 and S582. Low complexity-rich tracts occupy residues 590-607 and 622-632; these read SNES…ASRS and ANRTTNTSSSS. Positions 749-769 are enriched in acidic residues; it reads DSSDSDSSDSDSDSGASDEDA. A helical membrane pass occupies residues 913-933; that stretch reads ILGTIVLPMNVITGLWGMNVI. At 934-941 the chain is on the extracellular side; the sequence is VPGQYRDS. A helical membrane pass occupies residues 942-962; it reads LTWFIGIVLFMCMLACSAYMY. Residues 963–969 are Cytoplasmic-facing; the sequence is TKRRFGF.

It belongs to the CorA metal ion transporter (MIT) (TC 1.A.35) family.

The protein resides in the membrane. The polypeptide is Manganese resistance protein MNR2 (MNR2) (Saccharomyces cerevisiae (strain ATCC 204508 / S288c) (Baker's yeast)).